Reading from the N-terminus, the 176-residue chain is Protein MAL2 (176 aa).

Residues 1-34 (MSAGGASVPPPPNPAVSFPVPRVTLPAGPDILRT) are Cytoplasmic-facing. Residues 31–175 (ILRTYSGAFV…SLGLALRRWR (145 aa)) enclose the MARVEL domain. Residues 35-55 (YSGAFVCLEILFGGLVWILVA) form a helical membrane-spanning segment. Residues 56–66 (SSNVPLPLLQG) are Lumenal-facing. The chain crosses the membrane as a helical span at residues 67–87 (WVMFVSVTAFFFSLLFLGLFL). At 88–102 (SGMVTQIDANWNFLD) the chain is on the cytoplasmic side. Residues 103-123 (FAYHFTVFVFYFGAFLLEAAA) traverse the membrane as a helical segment. Topologically, residues 124-149 (TSLHDLHYNITMTGQPLLNDNQYNIN) are lumenal. Residue N132 is glycosylated (N-linked (GlcNAc...) asparagine). The chain crosses the membrane as a helical span at residues 150–170 (VAASIFAFMTTACYGCSLGLA). Over 171–176 (LRRWRP) the chain is Cytoplasmic.

It belongs to the MAL family. In terms of assembly, interacts with TPD52L2.

The protein resides in the cell membrane. Its subcellular location is the apical cell membrane. Member of the machinery of polarized transport. Required for the indirect transcytotic route at the step of the egress of the transcytosing cargo from perinuclear endosomes in order for it to travel to the apical surface via a raft-dependent pathway. The protein is Protein MAL2 (MAL2) of Pongo abelii (Sumatran orangutan).